Reading from the N-terminus, the 287-residue chain is Elongation factor Ts (287 aa).

The segment at 79–82 is involved in Mg(2+) ion dislocation from EF-Tu; it reads TDFV.

It belongs to the EF-Ts family.

Its subcellular location is the cytoplasm. Functionally, associates with the EF-Tu.GDP complex and induces the exchange of GDP to GTP. It remains bound to the aminoacyl-tRNA.EF-Tu.GTP complex up to the GTP hydrolysis stage on the ribosome. The protein is Elongation factor Ts of Anaplasma phagocytophilum (strain HZ).